Consider the following 393-residue polypeptide: Enoyl-[acyl-carrier-protein] reductase [NADH] (393 aa).

NAD(+)-binding positions include 48–53 (GSSTGY), 74–75 (FE), 111–112 (DA), and 139–140 (LA). Tyrosine 225 contacts substrate. Catalysis depends on tyrosine 235, which acts as the Proton donor. Residues lysine 244 and 273 to 275 (LVT) each bind NAD(+).

The protein belongs to the TER reductase family. Monomer.

It carries out the reaction a 2,3-saturated acyl-[ACP] + NAD(+) = a (2E)-enoyl-[ACP] + NADH + H(+). It participates in lipid metabolism; fatty acid biosynthesis. In terms of biological role, involved in the final reduction of the elongation cycle of fatty acid synthesis (FAS II). Catalyzes the reduction of a carbon-carbon double bond in an enoyl moiety that is covalently linked to an acyl carrier protein (ACP). The chain is Enoyl-[acyl-carrier-protein] reductase [NADH] from Pseudoalteromonas atlantica (strain T6c / ATCC BAA-1087).